Here is a 448-residue protein sequence, read N- to C-terminus: Signal recognition particle 54 kDa protein (448 aa).

Residues 107-114 (GIQGSGKT), 189-193 (DSAGR), and 247-250 (TKLD) each bind GTP.

This sequence belongs to the GTP-binding SRP family. SRP54 subfamily. In terms of assembly, part of the signal recognition particle protein translocation system, which is composed of SRP and FtsY. Archaeal SRP consists of a 7S RNA molecule of 300 nucleotides and two protein subunits: SRP54 and SRP19.

Its subcellular location is the cytoplasm. The catalysed reaction is GTP + H2O = GDP + phosphate + H(+). Functionally, involved in targeting and insertion of nascent membrane proteins into the cytoplasmic membrane. Binds to the hydrophobic signal sequence of the ribosome-nascent chain (RNC) as it emerges from the ribosomes. The SRP-RNC complex is then targeted to the cytoplasmic membrane where it interacts with the SRP receptor FtsY. This is Signal recognition particle 54 kDa protein from Thermococcus onnurineus (strain NA1).